The sequence spans 510 residues: Putative cytochrome P450 cyp-13B1 (510 aa).

C456 contacts heme.

It belongs to the cytochrome P450 family. The cofactor is heme.

Cytochromes P450 are a group of heme-thiolate monooxygenases. They oxidize a variety of structurally unrelated compounds, including steroids, fatty acids, and xenobiotics. May play a role in the regulation of lifespan. The sequence is that of Putative cytochrome P450 cyp-13B1 from Caenorhabditis elegans.